The following is a 77-amino-acid chain: MASSSKCAFLVFLCMIVLLAPSEVHAKSMAKAQGGWYLVEGLCSKFPDCNKHCKEQGFLGGQCLKLGVNMLCFCIHT.

The N-terminal stretch at 1-26 (MASSSKCAFLVFLCMIVLLAPSEVHA) is a signal peptide. Cystine bridges form between C43/C63, C49/C72, and C53/C74.

It belongs to the DEFL family.

Its subcellular location is the secreted. This is Putative defensin-like protein 30 from Arabidopsis thaliana (Mouse-ear cress).